Reading from the N-terminus, the 149-residue chain is Large ribosomal subunit protein bL9 (149 aa).

It belongs to the bacterial ribosomal protein bL9 family.

Binds to the 23S rRNA. The polypeptide is Large ribosomal subunit protein bL9 (Mannheimia succiniciproducens (strain KCTC 0769BP / MBEL55E)).